The primary structure comprises 325 residues: Isoaspartyl peptidase/L-asparaginase (325 aa).

Thr-193 serves as the catalytic Nucleophile. Substrate is bound by residues 221 to 224 (RIGD) and 243 to 246 (TGKG).

Belongs to the Ntn-hydrolase family. In terms of assembly, heterotetramer of two alpha and two beta chains arranged as a dimer of alpha/beta heterodimers. Post-translationally, cleaved into an alpha and beta chain by autocatalysis; this activates the enzyme. The N-terminal residue of the beta subunit is responsible for the nucleophile hydrolase activity. In terms of tissue distribution, developing seeds.

The catalysed reaction is Cleavage of a beta-linked Asp residue from the N-terminus of a polypeptide.. Functionally, acts in asparagine catabolism but also in the final steps of protein degradation via hydrolysis of a range of isoaspartyl dipeptides. This is Isoaspartyl peptidase/L-asparaginase from Lupinus angustifolius (Narrow-leaved blue lupine).